The following is a 416-amino-acid chain: Isobutyryl-CoA dehydrogenase, mitochondrial (416 aa).

A mitochondrion-targeting transit peptide spans 1 to 21; it reads MISGLFKLSNKQSVLQNATKL. FAD-binding positions include 156–165 and 189–191; these read YCLTEPGSGS and FIS. S165 contributes to the substrate binding site. A substrate-binding site is contributed by 273–276; the sequence is NGGR. FAD is bound by residues R301, 311–312, and 370–374; these read FQ and QLFGG. The Proton acceptor role is filled by E397. 399–401 serves as a coordination point for FAD; that stretch reads SDA. Substrate is bound at residue R409.

This sequence belongs to the acyl-CoA dehydrogenase family. Homotetramer. The cofactor is FAD.

It localises to the mitochondrion. The enzyme catalyses 2-methylpropanoyl-CoA + oxidized [electron-transfer flavoprotein] + H(+) = 2-methylpropenoyl-CoA + reduced [electron-transfer flavoprotein]. It carries out the reaction (2S)-2-methylbutanoyl-CoA + oxidized [electron-transfer flavoprotein] + H(+) = (2E)-2-methylbut-2-enoyl-CoA + reduced [electron-transfer flavoprotein]. The catalysed reaction is propanoyl-CoA + oxidized [electron-transfer flavoprotein] + H(+) = acryloyl-CoA + reduced [electron-transfer flavoprotein]. It functions in the pathway amino-acid degradation; L-valine degradation. Its function is as follows. Isobutyryl-CoA dehydrogenase which catalyzes one of the steps of the valine catabolic pathway. To a lesser extent, is also able to catalyze the oxidation of (2S)-2-methylbutanoyl-CoA. This chain is Isobutyryl-CoA dehydrogenase, mitochondrial (acad8), found in Dictyostelium discoideum (Social amoeba).